Consider the following 187-residue polypeptide: Interferon beta (187 aa).

An N-terminal signal peptide occupies residues 1–21 (MTNKCLLQIALLLCFSTTALS). The residue at position 24 (tyrosine 24) is a Phosphotyrosine. The cysteines at positions 52 and 162 are disulfide-linked. N-linked (GlcNAc...) asparagine glycosylation is present at asparagine 101.

The protein belongs to the alpha/beta interferon family. In terms of assembly, monomer.

It is found in the secreted. Functionally, type I interferon cytokine that plays a key role in the innate immune response to infection, developing tumors and other inflammatory stimuli. Signals via binding to high-affinity (IFNAR2) and low-affinity (IFNAR1) heterodimeric receptor, activating the canonical Jak-STAT signaling pathway resulting in transcriptional activation or repression of interferon-regulated genes that encode the effectors of the interferon response, such as antiviral proteins, regulators of cell proliferation and differentiation, and immunoregulatory proteins. Signals mostly via binding to a IFNAR1-IFNAR2 heterodimeric receptor, but can also function with IFNAR1 alone and independently of Jak-STAT pathways. Elicits a wide variety of responses, including antiviral and antibacterial activities, and can regulate the development of B-cells, myelopoiesis and lipopolysaccharide (LPS)-inducible production of tumor necrosis factor. Plays a role in neuronal homeostasis by regulating dopamine turnover and protecting dopaminergic neurons: acts by promoting neuronal autophagy and alpha-synuclein clearance, thereby preventing dopaminergic neuron loss. IFNB1 is more potent than interferon-alpha (IFN-alpha) in inducing the apoptotic and antiproliferative pathways required for control of tumor cell growth. The polypeptide is Interferon beta (IFNB1) (Macaca fascicularis (Crab-eating macaque)).